We begin with the raw amino-acid sequence, 85 residues long: U4-theraphotoxin-Hhn1a (85 aa).

The N-terminal stretch at 1–22 is a signal peptide; that stretch reads MKVTLISILTCAAVLVLHTTAA. Positions 23 to 48 are excised as a propeptide; the sequence is EELEAESQLMEVGMPDTELAAVDEER. 3 disulfides stabilise this stretch: cysteine 52–cysteine 66, cysteine 56–cysteine 77, and cysteine 71–cysteine 82.

The protein belongs to the neurotoxin 12 (Hwtx-2) family. 02 (Hwtx-2) subfamily. As to quaternary structure, monomer. As to expression, expressed by the venom gland.

It localises to the secreted. Neurotoxin active on both insects and mammals. The chain is U4-theraphotoxin-Hhn1a from Cyriopagopus hainanus (Chinese bird spider).